The chain runs to 409 residues: Lissencephaly-1 homolog (409 aa).

The LisH domain maps to 7–39 (QKEELNKAIADYLHQCGFEDTLNAFKQDANMPG). Residues 54–80 (TSVIRLQKKVMDLETRLSEAEKEVHHG) adopt a coiled-coil conformation. Residues 72–95 (EAEKEVHHGGGPKKTRSPEDWIPR) form a disordered region. WD repeat units follow at residues 104-145 (GHRS…RTLK), 146-187 (GHTD…RTLH), 188-229 (GHDH…KTFQ), 231-269 (HGEW…CKCD), 272-332 (DHDH…CLVT), 335-374 (GHDN…CAKT), and 377-409 (AHEH…WECR).

It belongs to the WD repeat LIS1/nudF family.

Its subcellular location is the cytoplasm. The protein resides in the cytoskeleton. The protein localises to the microtubule organizing center. It localises to the centrosome. Its function is as follows. Positively regulates the activity of the minus-end directed microtubule motor protein dynein. May enhance dynein-mediated microtubule sliding by targeting dynein to the microtubule plus end. Required for several dynein- and microtubule-dependent processes. This chain is Lissencephaly-1 homolog, found in Nematostella vectensis (Starlet sea anemone).